We begin with the raw amino-acid sequence, 369 residues long: Aminomethyltransferase (369 aa).

The protein belongs to the GcvT family. As to quaternary structure, the glycine cleavage system is composed of four proteins: P, T, L and H.

The enzyme catalyses N(6)-[(R)-S(8)-aminomethyldihydrolipoyl]-L-lysyl-[protein] + (6S)-5,6,7,8-tetrahydrofolate = N(6)-[(R)-dihydrolipoyl]-L-lysyl-[protein] + (6R)-5,10-methylene-5,6,7,8-tetrahydrofolate + NH4(+). The glycine cleavage system catalyzes the degradation of glycine. This chain is Aminomethyltransferase, found in Synechococcus sp. (strain CC9311).